The sequence spans 559 residues: DDB1- and CUL4-associated factor 10 (559 aa).

Residues 1 to 119 (MFPFGPHSPG…HGLGAGLGGP (119 aa)) form a disordered region. 4 positions are modified to phosphoserine: S53, S63, S89, and S92. Residues 56 to 86 (RPGAPSLSPAPRSGELGLPGAPESSTASAPG) show a composition bias toward low complexity. Pro residues predominate over residues 87 to 97 (EPSPPSPPCRR). An Omega-N-methylarginine modification is found at R134. WD repeat units lie at residues 166–205 (RTHG…HIKT), 209–247 (AHED…TKVC), 251–290 (GHTS…EDGC), and 296–335 (FHTR…KSLE). S349 carries the post-translational modification Phosphoserine. Residues 350-367 (SSDLTTSSSSSGPRVSGS) show a composition bias toward low complexity. Residues 350-396 (SSDLTTSSSSSGPRVSGSPCHHSDSNSSEKHMSRASQREGVSPRNSL) form a disordered region. Residues 370 to 381 (HHSDSNSSEKHM) show a composition bias toward basic and acidic residues. WD repeat units follow at residues 408–448 (DHGN…QEGA), 470–508 (VGRG…SELV), and 526–559 (SHND…QPKF).

It belongs to the WD repeat DCAF10 family. Interacts with DDB1.

Its pathway is protein modification; protein ubiquitination. Its function is as follows. May function as a substrate receptor for CUL4-DDB1 E3 ubiquitin-protein ligase complex. This Homo sapiens (Human) protein is DDB1- and CUL4-associated factor 10 (DCAF10).